The following is a 506-amino-acid chain: Maturase K (506 aa).

Belongs to the intron maturase 2 family. MatK subfamily.

The protein localises to the plastid. It is found in the chloroplast. Functionally, usually encoded in the trnK tRNA gene intron. Probably assists in splicing its own and other chloroplast group II introns. The sequence is that of Maturase K from Trifolium repens (Creeping white clover).